The chain runs to 355 residues: MSGISAQLVKKLRDLTDAGMMDCKKALVEVAGDLQKAIDFLREKGLSKAAKKADRIAAEGVVALEVAPDFKSAMMVEINSETDFVAKNEGFKELVKKTLETIKAHNIHTPEELLKSPLDNKPFEEYLHSQIAVIGENILVRKIAHLKAPSSHIINGYAHSNARVGVLIGIKYNNEKNAPKVVELARNIAMHAAAMKPQVLDCKDFSLDFVKKETLALIAEIEKDNEEAKRLGKPLKNIPTFGSRIELSDEVLAHQKKAFENELKEQGKPEKIWDKIVPGKMERFIADNTLIDQRLTLLGQFYVMDDKKTIAQVVADCSKEWDDDLKITEYVRFELGEGIEKKAENFAEEVALQMK.

The segment at 82–85 is involved in Mg(2+) ion dislocation from EF-Tu; that stretch reads TDFV.

This sequence belongs to the EF-Ts family.

It localises to the cytoplasm. Its function is as follows. Associates with the EF-Tu.GDP complex and induces the exchange of GDP to GTP. It remains bound to the aminoacyl-tRNA.EF-Tu.GTP complex up to the GTP hydrolysis stage on the ribosome. The polypeptide is Elongation factor Ts (Helicobacter pylori (strain P12)).